We begin with the raw amino-acid sequence, 311 residues long: Putative mitochondrial transporter UCP3 (311 aa).

Residues 1–10 (MVGLQPSERP) are Mitochondrial intermembrane-facing. The helical transmembrane segment at 11–32 (PTTSVKFLAAGTAACFADLLTF) threads the bilayer. 3 Solcar repeats span residues 11-105 (PTTS…VKQF), 114-205 (SSII…IKEK), and 214-299 (DNFP…MKRA). Topologically, residues 33-76 (PLDTAKVRLQIQGENQAALAARSAQYRGVLGTILTMVRTEGPRS) are mitochondrial matrix. A helical transmembrane segment spans residues 77-99 (LYSGLVAGLQRQMSFASIRIGLY). At 100-119 (DSVKQFYTPKGSDHSSIITR) the chain is on the mitochondrial intermembrane side. The chain crosses the membrane as a helical span at residues 120–136 (ILAGCTTGAMAVTCAQP). At 137–182 (TDVVKIRFQASMHTGLGGNRKYSGTMDAYRTIAREEGVRGLWKGIL) the chain is on the mitochondrial matrix side. A helical transmembrane segment spans residues 183–199 (PNITRNAIVNCGEMVTY). Over 200–216 (DIIKEKLLDYHLLTDNF) the chain is Mitochondrial intermembrane. Residues 217–236 (PCHFVSAFGAGFCATLVASP) form a helical membrane-spanning segment. The Mitochondrial matrix portion of the chain corresponds to 237–270 (VDVVKTRYMNSPPGQYHSPFDCMLKMVTQEGPTA). The helical transmembrane segment at 271–293 (FYKGFTPSFLRLGSWNVVMFVTY) threads the bilayer. The purine nucleotide binding stretch occupies residues 278-300 (SFLRLGSWNVVMFVTYEQMKRAL). At 294–311 (EQMKRALMKVQMLRDSPF) the chain is on the mitochondrial intermembrane side.

The protein belongs to the mitochondrial carrier (TC 2.A.29) family. Interacts with HAX1; the interaction is direct and calcium-dependent.

Its subcellular location is the mitochondrion inner membrane. Functionally, putative transmembrane transporter that plays a role in mitochondrial metabolism via an as yet unclear mechanism. Originally, this mitochondrial protein was thought to act as a proton transmembrane transporter from the mitochondrial intermembrane space into the matrix, causing proton leaks through the inner mitochondrial membrane, thereby uncoupling mitochondrial membrane potential generation from ATP synthesis. However, this function is controversial and uncoupling may not be the function, or at least not the main function, but rather a consequence of more conventional metabolite transporter activity. The sequence is that of Putative mitochondrial transporter UCP3 from Bos taurus (Bovine).